The primary structure comprises 336 residues: MNNPKYPKVNYIGNKEKIAEWICEQLPVDVRTIADVFSGGCSFSFEAKKRGYQVIANDILNINYQLALALIVNNQEILTACDVDFIFSNPPKSGFMTKNYSDVFFFKEECRELDAIRANILKLNNTYKQALAFALMRRAMIRKMPYSRFTISWEKVKQLRDEEYSYSKYGRRRAYHNQSFEFHFRENLNSYNQAVFNNGNIHQAYNEDVFELLDHIQADAVYLDPPYTGTMNNYFGFYGLLDSYMSGEIRQPFDNHFMDKNQAVELFEKLIEKLKPFKYWLLSYNNVSRPNREELTAMLSRNGRKVTVLETPHVYKVTGKENKQKHTELLFLVENR.

The protein belongs to the N(4)/N(6)-methyltransferase family.

It carries out the reaction a 2'-deoxyadenosine in DNA + S-adenosyl-L-methionine = an N(6)-methyl-2'-deoxyadenosine in DNA + S-adenosyl-L-homocysteine + H(+). In terms of biological role, an alpha subtype methylase that recognizes the double-stranded sequence 5'-GGTGA-3', probably methylates A-5 on the top strand, and protects the DNA from cleavage by the HphI endonuclease. The polypeptide is Type II methyltransferase M2.HphI (hphIBM) (Haemophilus parahaemolyticus).